Here is a 33-residue protein sequence, read N- to C-terminus: Neutrophil defensin 1 (33 aa).

3 disulfides stabilise this stretch: Cys3-Cys31, Cys5-Cys20, and Cys10-Cys30.

It belongs to the alpha-defensin family.

It localises to the secreted. In terms of biological role, anti-fungal and bactericidal activity, greater against Gram-positive bacteria. This is Neutrophil defensin 1 from Mesocricetus auratus (Golden hamster).